The following is a 179-amino-acid chain: Coiled-coil domain-containing protein 32 (179 aa).

A disordered region spans residues 36 to 65 (DNAFSDSFMDSHPAGESHTAAADSAVQPAG). A coiled-coil region spans residues 75–98 (EVYLASLEKKLRRIKGLNEEVTSK). The segment at 158-179 (LIPPESQAEKPEAGDKPAAAEQ) is disordered.

Interacts with AP2S1; the interaction is direct and mediates association with adaptor protein complex 2 (AP-2).

The protein localises to the membrane. The protein resides in the coated pit. Functionally, regulates clathrin-mediated endocytsois of cargos such as transferrin probably through the association and modulation of adaptor protein complex 2 (AP-2). Has a role in ciliogenesis. Required for proper cephalic and left/right axis development. The sequence is that of Coiled-coil domain-containing protein 32 (Ccdc32) from Mus musculus (Mouse).